We begin with the raw amino-acid sequence, 562 residues long: MDDNKRPLYLPFAGPAILEAPLINKGSAFSEEERIFFNLEGLVPYAIETIEEQASRAYDQFRSFNNDLDKHIYLRNIQDTNETLFYRLVQNHISEMMPIIYTPTVGLACERFSKNYRRNRGLFISYPNKDRIDDILNNSTRQKVKIIVVTDGERILGLGDQGIGGMGIPIGKLSLYTSCGGISPAYTLPITLDVGTDNPQLLEDPMYMGWRHPRIGGEEYAEFIEAFMQAVHVRWPDTLIQFEDFAQKNAMPILERYKERYCCFNDDIQGTAAVTVGSLLAACKAAGTELNKQRVAFLGAGSAGCGIAEAIVAQMVSEGISDEQARSQVCMVDRWGLLLDNMPNLLPFQQKLAQKCADISHWNNFSDNISLLDVVNNVKPTVLIGVSGAPGLFTEEIVRAMHSHCERPIIFPLSNPTSRVEATPKDILHWTSGQALVATGSPFEPVVVDGETYEIAQCNNSFIFPGIGLGVLASGARHVSDAMLMASSRALAECSPLAINGSGPLLPKLEDIHSVSKHIAFAVGKVAIEQGLSLPASDELLMQSIEDNFWKPEYRRYKRTSF.

Catalysis depends on Tyr-101, which acts as the Proton donor. Residue Arg-154 participates in NAD(+) binding. Lys-172 acts as the Proton acceptor in catalysis. 3 residues coordinate a divalent metal cation: Glu-243, Asp-244, and Asp-267. Residues Asp-267 and Asn-415 each contribute to the NAD(+) site.

This sequence belongs to the malic enzymes family. As to quaternary structure, homotetramer. It depends on Mg(2+) as a cofactor. The cofactor is Mn(2+).

The enzyme catalyses (S)-malate + NAD(+) = pyruvate + CO2 + NADH. The catalysed reaction is oxaloacetate + H(+) = pyruvate + CO2. This Shewanella sp. (strain MR-4) protein is NAD-dependent malic enzyme.